A 117-amino-acid chain; its full sequence is Hydrogenase maturation factor HypA (117 aa).

Residue His2 participates in Ni(2+) binding. 4 residues coordinate Zn(2+): Cys73, Cys76, Cys90, and Cys93.

The protein belongs to the HypA/HybF family.

Functionally, involved in the maturation of [NiFe] hydrogenases. Required for nickel insertion into the metal center of the hydrogenase. This is Hydrogenase maturation factor HypA from Pectobacterium atrosepticum (strain SCRI 1043 / ATCC BAA-672) (Erwinia carotovora subsp. atroseptica).